Here is a 456-residue protein sequence, read N- to C-terminus: ATP-dependent protease ATPase subunit HslU (456 aa).

ATP-binding positions include I18, 60-65, D270, E334, and R406; that span reads GVGKTE.

This sequence belongs to the ClpX chaperone family. HslU subfamily. In terms of assembly, a double ring-shaped homohexamer of HslV is capped on each side by a ring-shaped HslU homohexamer. The assembly of the HslU/HslV complex is dependent on binding of ATP.

It localises to the cytoplasm. In terms of biological role, ATPase subunit of a proteasome-like degradation complex; this subunit has chaperone activity. The binding of ATP and its subsequent hydrolysis by HslU are essential for unfolding of protein substrates subsequently hydrolyzed by HslV. HslU recognizes the N-terminal part of its protein substrates and unfolds these before they are guided to HslV for hydrolysis. This is ATP-dependent protease ATPase subunit HslU from Exiguobacterium sibiricum (strain DSM 17290 / CCUG 55495 / CIP 109462 / JCM 13490 / 255-15).